The primary structure comprises 432 residues: 7-dehydrocholesterol reductase (432 aa).

The next 9 membrane-spanning stretches (helical) occupy residues 12-34, 64-86, 107-126, 136-155, 195-212, 227-249, 261-283, 287-309, and 371-393; these read YASM…YTMV, LIAW…LLPG, LAAY…FGIF, GEIF…LLYI, FTNC…AVTY, MLVN…AGYW, FYIC…MYLV, VELG…YINY, and SAFF…VIFL.

This sequence belongs to the ERG4/ERG24 family.

It localises to the endoplasmic reticulum membrane. It catalyses the reaction cholesterol + NADP(+) = 7-dehydrocholesterol + NADPH + H(+). It participates in lipid metabolism; steroid biosynthesis. Production of cholesterol by reduction of C7-C8 double bond of 7-dehydrocholesterol (7-DHC). Lesions in the gene coding for the enzyme cause dwarfism. This is 7-dehydrocholesterol reductase (DWF5) from Arabidopsis thaliana (Mouse-ear cress).